Reading from the N-terminus, the 362-residue chain is UDP-N-acetylglucosamine--N-acetylmuramyl-(pentapeptide) pyrophosphoryl-undecaprenol N-acetylglucosamine transferase (362 aa).

UDP-N-acetyl-alpha-D-glucosamine is bound by residues 14-16, Asn-122, Arg-163, Ser-190, and Gln-285; that span reads TGG.

It belongs to the glycosyltransferase 28 family. MurG subfamily.

Its subcellular location is the cell inner membrane. The catalysed reaction is di-trans,octa-cis-undecaprenyl diphospho-N-acetyl-alpha-D-muramoyl-L-alanyl-D-glutamyl-meso-2,6-diaminopimeloyl-D-alanyl-D-alanine + UDP-N-acetyl-alpha-D-glucosamine = di-trans,octa-cis-undecaprenyl diphospho-[N-acetyl-alpha-D-glucosaminyl-(1-&gt;4)]-N-acetyl-alpha-D-muramoyl-L-alanyl-D-glutamyl-meso-2,6-diaminopimeloyl-D-alanyl-D-alanine + UDP + H(+). It functions in the pathway cell wall biogenesis; peptidoglycan biosynthesis. Its function is as follows. Cell wall formation. Catalyzes the transfer of a GlcNAc subunit on undecaprenyl-pyrophosphoryl-MurNAc-pentapeptide (lipid intermediate I) to form undecaprenyl-pyrophosphoryl-MurNAc-(pentapeptide)GlcNAc (lipid intermediate II). This Prochlorococcus marinus (strain MIT 9215) protein is UDP-N-acetylglucosamine--N-acetylmuramyl-(pentapeptide) pyrophosphoryl-undecaprenol N-acetylglucosamine transferase.